The primary structure comprises 202 residues: V-type ATP synthase subunit D (202 aa).

The protein belongs to the V-ATPase D subunit family.

Produces ATP from ADP in the presence of a proton gradient across the membrane. The sequence is that of V-type ATP synthase subunit D (atpD) from Borreliella burgdorferi (strain ATCC 35210 / DSM 4680 / CIP 102532 / B31) (Borrelia burgdorferi).